Here is a 226-residue protein sequence, read N- to C-terminus: Glutathione S-transferase kappa 1 (226 aa).

16–18 (SPY) is a glutathione binding site. 2 positions are modified to N6-succinyllysine: lysine 36 and lysine 49. Position 53 (asparagine 53) interacts with glutathione. N6-acetyllysine; alternate occurs at positions 68 and 74. An N6-succinyllysine; alternate mark is found at lysine 68 and lysine 74. Residue lysine 85 is modified to N6-acetyllysine. N6-acetyllysine; alternate occurs at positions 93 and 116. 2 positions are modified to N6-succinyllysine; alternate: lysine 93 and lysine 116. Residue lysine 144 is modified to N6-succinyllysine. An N6-acetyllysine; alternate modification is found at lysine 158. An N6-succinyllysine; alternate modification is found at lysine 158. Lysine 165 is modified (N6-acetyllysine). N6-acetyllysine; alternate is present on residues lysine 167 and lysine 177. 2 positions are modified to N6-succinyllysine; alternate: lysine 167 and lysine 177. Leucine 183 serves as a coordination point for glutathione. Lysine 193 bears the N6-succinyllysine mark. Glutathione is bound at residue 200–201 (SD).

The protein belongs to the GST superfamily. Kappa family. In terms of assembly, homodimer.

It is found in the mitochondrion matrix. The enzyme catalyses RX + glutathione = an S-substituted glutathione + a halide anion + H(+). In terms of biological role, glutathione S-transferase that catalyzes the conjugation of glutathione to exogenous and endogenous compounds. This is Glutathione S-transferase kappa 1 (Gstk1) from Rattus norvegicus (Rat).